The primary structure comprises 260 residues: MFEARLINATILKKILDAIKELLHEATFECSESGIQLQAMDNSHVSLGSLTLRSDGFDKFRCDRNISMGMNLGSMAKILKCANNDDTVTVKAQDNADTVTFMFESPNHEKVSDYEMKLMNLDQEHLGIPETDYSCVVRMPSMEFARICRDLAQFSESMLICCTKEGVKFSASGDVGSANVKLAQTSSVDKEEEAVIIEMQEPVTLTFACRYLNAFTKATPLSAQVQLSMCADVPLVVEYAIKELGHIRYYLAPKIEDDES.

Residues 61 to 80 (RCDRNISMGMNLGSMAKILK) mediate DNA binding.

Belongs to the PCNA family. As to quaternary structure, homotrimer. Forms a complex with activator 1 heteropentamer in the presence of ATP.

The protein localises to the nucleus. In terms of biological role, this protein is an auxiliary protein of DNA polymerase delta and is involved in the control of eukaryotic DNA replication by increasing the polymerase's processibility during elongation of the leading strand. The chain is Proliferating cell nuclear antigen (PCNA) from Sarcophaga crassipalpis (Flesh fly).